The sequence spans 239 residues: Seed lectin beta chain (239 aa).

D-glucose-binding residues include D88 and G106. Mn(2+) contacts are provided by E126 and D128. D128, N132, and D137 together coordinate Ca(2+). Positions 137 and 142 each coordinate Mn(2+). Residues G217 and A218 each coordinate D-glucose.

Belongs to the leguminous lectin family. In terms of assembly, tetramer consisting of heterodimers of alpha and beta chains.

Galactose-binding lectin. Agglutinates human erythrocytes, and requires Ca(2+) and Mn(2+) ions for full agglutinating activity. Has antifungal activity against Fusarium sp., A.niger and A.flavus. The polypeptide is Seed lectin beta chain (Spatholobus parviflorus (Butea parviflora)).